The sequence spans 306 residues: Mycothiol acetyltransferase (306 aa).

2 N-acetyltransferase domains span residues 5 to 162 (VWAE…TFVP) and 155 to 306 (VRLR…AQGS). Residues 82 to 84 (LIV) and 90 to 95 (RRGHGT) each bind acetyl-CoA. Glu182, Lys222, and Glu238 together coordinate 1D-myo-inositol 2-(L-cysteinylamino)-2-deoxy-alpha-D-glucopyranoside. Residues 242 to 244 (VGV) and 249 to 255 (QGGGLGK) each bind acetyl-CoA. Tyr276 lines the 1D-myo-inositol 2-(L-cysteinylamino)-2-deoxy-alpha-D-glucopyranoside pocket.

Belongs to the acetyltransferase family. MshD subfamily. Monomer.

The enzyme catalyses 1D-myo-inositol 2-(L-cysteinylamino)-2-deoxy-alpha-D-glucopyranoside + acetyl-CoA = mycothiol + CoA + H(+). Its function is as follows. Catalyzes the transfer of acetyl from acetyl-CoA to desacetylmycothiol (Cys-GlcN-Ins) to form mycothiol. This is Mycothiol acetyltransferase from Saccharomonospora viridis (strain ATCC 15386 / DSM 43017 / JCM 3036 / CCUG 5913 / NBRC 12207 / NCIMB 9602 / P101) (Thermoactinomyces viridis).